Consider the following 331-residue polypeptide: MTNRKDDHIKYALDYRSPYNSFDDIELIHHSLPDYDLAEIDLSTHFAGQDFDFPFYINAMTGGSQKGKEVNEKLAQVADTCGLLFVTGSYSTALKNPDDTSYQVKKSRPHLLLATNIGLDKPYQAGLQAVRDLQPLFLQVHINLMQELLMPEGEREFRSWKKHLSDYAKKLQLPFILKEVGFGMDVKTIQTAIDLGVKTVDISGRGGTSFAYIENRRGGNRSYLNQWGQTTAQVLLNAQPLMDKVEILASGGIRHPLDIIKALVLGAKAVGLSRTMLELVEQHSVHEVIAIVNGWKEDLRLIMCALNCQTIAELRNVDYLLYGRLREGQRQ.

Residue 4-5 participates in substrate binding; the sequence is RK. FMN is bound by residues 59–61, S89, and N116; that span reads AMT. Q146 provides a ligand contact to substrate. E147 provides a ligand contact to Mg(2+). Residues K178, S203, T208, 252-254, and 273-274 each bind FMN; these read GIR and SR.

The protein belongs to the IPP isomerase type 2 family. As to quaternary structure, homooctamer. Dimer of tetramers. The cofactor is FMN. It depends on NADPH as a cofactor. Mg(2+) is required as a cofactor.

Its subcellular location is the cytoplasm. It carries out the reaction isopentenyl diphosphate = dimethylallyl diphosphate. In terms of biological role, involved in the biosynthesis of isoprenoids. Catalyzes the 1,3-allylic rearrangement of the homoallylic substrate isopentenyl (IPP) to its allylic isomer, dimethylallyl diphosphate (DMAPP). The chain is Isopentenyl-diphosphate delta-isomerase from Streptococcus mutans serotype c (strain ATCC 700610 / UA159).